We begin with the raw amino-acid sequence, 314 residues long: Putative peptide transport system permease protein BRA1092/BS1330_II1084 (314 aa).

The next 6 helical transmembrane spans lie at 12 to 32 (AIPVMLIVAILTFLLMKLLPG), 101 to 121 (LALLAFAITIPVGIIMGVVAA), 135 to 155 (LALLGVSVPSFWLAILAVILF), 177 to 197 (WLRSLILPASILALFQIGYLA), 237 to 257 (VSVLTVSGYIFSLLIGGSVVI), and 286 to 306 (MLFLGFLFVAINVLVDILYTI). The 210-residue stretch at 95–304 (LPVTISLALL…AINVLVDILY (210 aa)) folds into the ABC transmembrane type-1 domain.

It belongs to the binding-protein-dependent transport system permease family. As to quaternary structure, the complex is composed of two ATP-binding proteins (BRA1094), two transmembrane proteins (BRA1092 and BRA1093) and a solute-binding protein (BRA1090).

It localises to the cell inner membrane. Probably part of an ABC transporter complex that could be involved in peptide import. Probably responsible for the translocation of the substrate across the membrane. The protein is Putative peptide transport system permease protein BRA1092/BS1330_II1084 of Brucella suis biovar 1 (strain 1330).